The primary structure comprises 464 residues: tRNA modification GTPase MnmE (464 aa).

Positions 25, 87, and 130 each coordinate (6S)-5-formyl-5,6,7,8-tetrahydrofolate. Positions 226 to 386 constitute a TrmE-type G domain; sequence GLSVVLAGQP…LREELLRIAG (161 aa). A K(+)-binding site is contributed by Asn236. Residues 236-241, 255-261, and 280-283 each bind GTP; these read NVGKSS, TPIAGTT, and DTAG. Ser240 serves as a coordination point for Mg(2+). K(+)-binding residues include Thr255, Ile257, and Thr260. Thr261 provides a ligand contact to Mg(2+). Position 464 (Lys464) interacts with (6S)-5-formyl-5,6,7,8-tetrahydrofolate.

The protein belongs to the TRAFAC class TrmE-Era-EngA-EngB-Septin-like GTPase superfamily. TrmE GTPase family. In terms of assembly, homodimer. Heterotetramer of two MnmE and two MnmG subunits. The cofactor is K(+).

The protein resides in the cytoplasm. Exhibits a very high intrinsic GTPase hydrolysis rate. Involved in the addition of a carboxymethylaminomethyl (cmnm) group at the wobble position (U34) of certain tRNAs, forming tRNA-cmnm(5)s(2)U34. This is tRNA modification GTPase MnmE from Paraburkholderia xenovorans (strain LB400).